A 193-amino-acid chain; its full sequence is Guanylate kinase (193 aa).

The Guanylate kinase-like domain maps to 12–191 (DLLTIVAGPT…AANELWLAMN (180 aa)). 19 to 26 (GPTAVGKG) contacts ATP.

Belongs to the guanylate kinase family.

Its subcellular location is the cytoplasm. The catalysed reaction is GMP + ATP = GDP + ADP. Its function is as follows. Essential for recycling GMP and indirectly, cGMP. This is Guanylate kinase from Tropheryma whipplei (strain TW08/27) (Whipple's bacillus).